We begin with the raw amino-acid sequence, 621 residues long: Membrane protein insertase YidC (621 aa).

6 consecutive transmembrane segments (helical) span residues 1–21, 363–383, 436–456, 486–506, 527–547, and 549–569; these read MDKN…GFSI, GWGL…KVLV, MGGC…FFFV, IPLL…TNIL, LMMY…SSGL, and YYYF…RKTT.

The protein belongs to the OXA1/ALB3/YidC family. Type 1 subfamily. As to quaternary structure, interacts with the Sec translocase complex via SecD. Specifically interacts with transmembrane segments of nascent integral membrane proteins during membrane integration.

It localises to the cell inner membrane. Its function is as follows. Required for the insertion and/or proper folding and/or complex formation of integral membrane proteins into the membrane. Involved in integration of membrane proteins that insert both dependently and independently of the Sec translocase complex, as well as at least some lipoproteins. Aids folding of multispanning membrane proteins. The sequence is that of Membrane protein insertase YidC from Phocaeicola vulgatus (strain ATCC 8482 / DSM 1447 / JCM 5826 / CCUG 4940 / NBRC 14291 / NCTC 11154) (Bacteroides vulgatus).